Reading from the N-terminus, the 83-residue chain is Exodeoxyribonuclease 7 small subunit (83 aa).

The protein belongs to the XseB family. As to quaternary structure, heterooligomer composed of large and small subunits.

It localises to the cytoplasm. The catalysed reaction is Exonucleolytic cleavage in either 5'- to 3'- or 3'- to 5'-direction to yield nucleoside 5'-phosphates.. In terms of biological role, bidirectionally degrades single-stranded DNA into large acid-insoluble oligonucleotides, which are then degraded further into small acid-soluble oligonucleotides. The polypeptide is Exodeoxyribonuclease 7 small subunit (Sinorhizobium medicae (strain WSM419) (Ensifer medicae)).